Consider the following 348-residue polypeptide: D-alanine--D-alanine ligase (348 aa).

Residues 132–334 (KRVLESIGIP…YPDLIEELVT (203 aa)) form the ATP-grasp domain. ATP is bound at residue 162–217 (LARLTFPIFVKPANMGSSVGISKAQTKVELRKAIQLALTYDSRVLIEQGVVAREIE). Mg(2+) contacts are provided by Asp-288, Glu-301, and Asn-303.

This sequence belongs to the D-alanine--D-alanine ligase family. It depends on Mg(2+) as a cofactor. Mn(2+) serves as cofactor.

It localises to the cytoplasm. The enzyme catalyses 2 D-alanine + ATP = D-alanyl-D-alanine + ADP + phosphate + H(+). Its pathway is cell wall biogenesis; peptidoglycan biosynthesis. Its function is as follows. Cell wall formation. The polypeptide is D-alanine--D-alanine ligase (Streptococcus pyogenes serotype M18 (strain MGAS8232)).